A 43-amino-acid chain; its full sequence is Alpha-conotoxin-like Leo-A1 (43 aa).

Residues 1-26 constitute a propeptide that is removed on maturation; it reads LTLDRASDDTDVAAEIMSGLIALAID. Disulfide bonds link cysteine 28–cysteine 34 and cysteine 29–cysteine 42. The lacks the Ser-Xaa-Pro motif that is crucial for potent interaction with nAChR stretch occupies residues 30 to 32; sequence SDS.

The protein belongs to the conotoxin A superfamily. Expressed by the venom duct.

It is found in the secreted. In terms of biological role, alpha-conotoxins act on postsynaptic membranes, they bind to the nicotinic acetylcholine receptors (nAChR) and thus inhibit them. Has possibly a distinct nAChR binding mode from other alpha-conotoxins, due to a different three residue motif (lacks the Ser-Xaa-Pro motif). The protein is Alpha-conotoxin-like Leo-A1 of Conus leopardus (Leopard cone).